The following is a 229-amino-acid chain: Peptidase E (229 aa).

Residues Ser-120, Asp-135, and His-157 each act as charge relay system in the active site.

It belongs to the peptidase S51 family.

It localises to the cytoplasm. The catalysed reaction is Dipeptidase E catalyzes the hydrolysis of dipeptides Asp-|-Xaa. It does not act on peptides with N-terminal Glu, Asn or Gln, nor does it cleave isoaspartyl peptides.. Functionally, hydrolyzes dipeptides containing N-terminal aspartate residues. May play a role in allowing the cell to use peptide aspartate to spare carbon otherwise required for the synthesis of the aspartate family of amino acids. The sequence is that of Peptidase E from Salmonella arizonae (strain ATCC BAA-731 / CDC346-86 / RSK2980).